Reading from the N-terminus, the 207-residue chain is Transcriptional regulatory protein RcsA (207 aa).

In terms of domain architecture, HTH luxR-type spans 131-196 (LTLPTLSLSK…VIYHIVRLTE (66 aa)). The segment at residues 155–174 (TSQISTQMNIKAKTVSSHKG) is a DNA-binding region (H-T-H motif).

It belongs to the RcsA family.

Component of the Rcs signaling system, which controls transcription of numerous genes. Binds to DNA to regulate expression of genes. In Klebsiella aerogenes (Enterobacter aerogenes), this protein is Transcriptional regulatory protein RcsA.